Consider the following 449-residue polypeptide: Bifunctional protein GlmU (449 aa).

The pyrophosphorylase stretch occupies residues 1–228 (MSTALVILAA…EAETLGINSR (228 aa)). Residues 8-11 (LAAG), lysine 22, glutamine 75, 80-81 (GT), 103-105 (YGD), glycine 140, glutamate 154, asparagine 169, and asparagine 226 each bind UDP-N-acetyl-alpha-D-glucosamine. Aspartate 105 provides a ligand contact to Mg(2+). Mg(2+) is bound at residue asparagine 226. The segment at 229 to 249 (ADLAAAEAVFQAHARAELLDI) is linker. The interval 250-449 (GVTLTAPETV…RAKKAAKAKG (200 aa)) is N-acetyltransferase. UDP-N-acetyl-alpha-D-glucosamine contacts are provided by arginine 315 and lysine 333. Histidine 345 (proton acceptor) is an active-site residue. UDP-N-acetyl-alpha-D-glucosamine-binding residues include tyrosine 348 and asparagine 359. Acetyl-CoA contacts are provided by residues alanine 362, 368-369 (NY), serine 387, threonine 405, and arginine 422.

In the N-terminal section; belongs to the N-acetylglucosamine-1-phosphate uridyltransferase family. The protein in the C-terminal section; belongs to the transferase hexapeptide repeat family. As to quaternary structure, homotrimer. Mg(2+) is required as a cofactor.

Its subcellular location is the cytoplasm. It catalyses the reaction alpha-D-glucosamine 1-phosphate + acetyl-CoA = N-acetyl-alpha-D-glucosamine 1-phosphate + CoA + H(+). The catalysed reaction is N-acetyl-alpha-D-glucosamine 1-phosphate + UTP + H(+) = UDP-N-acetyl-alpha-D-glucosamine + diphosphate. The protein operates within nucleotide-sugar biosynthesis; UDP-N-acetyl-alpha-D-glucosamine biosynthesis; N-acetyl-alpha-D-glucosamine 1-phosphate from alpha-D-glucosamine 6-phosphate (route II): step 2/2. Its pathway is nucleotide-sugar biosynthesis; UDP-N-acetyl-alpha-D-glucosamine biosynthesis; UDP-N-acetyl-alpha-D-glucosamine from N-acetyl-alpha-D-glucosamine 1-phosphate: step 1/1. It participates in bacterial outer membrane biogenesis; LPS lipid A biosynthesis. In terms of biological role, catalyzes the last two sequential reactions in the de novo biosynthetic pathway for UDP-N-acetylglucosamine (UDP-GlcNAc). The C-terminal domain catalyzes the transfer of acetyl group from acetyl coenzyme A to glucosamine-1-phosphate (GlcN-1-P) to produce N-acetylglucosamine-1-phosphate (GlcNAc-1-P), which is converted into UDP-GlcNAc by the transfer of uridine 5-monophosphate (from uridine 5-triphosphate), a reaction catalyzed by the N-terminal domain. The sequence is that of Bifunctional protein GlmU from Ruegeria sp. (strain TM1040) (Silicibacter sp.).